The following is a 289-amino-acid chain: Cysteine-rich venom protein Mr30 (289 aa).

A signal peptide spans 1–24 (MLSTMQTVGAILMLSIVFVAGTKR). A 4-carboxyglutamate modification is found at glutamate 33. The region spanning 62–184 (VRMHNVIRAT…GEDRYFVCNY (123 aa)) is the SCP domain.

This sequence belongs to the CRISP family. Contains 11 disulfide bonds. Expressed by the venom duct.

The protein localises to the secreted. In terms of biological role, has no proteolytic activity. The chain is Cysteine-rich venom protein Mr30 from Conus marmoreus (Marble cone).